The sequence spans 482 residues: Proton extrusion protein PxcA (482 aa).

4 helical membrane-spanning segments follow: residues 265-285 (FVLGLMIVPLLTQQVSKNLVI), 359-379 (PLKNAISDLFSLVALAIYFVL), 406-426 (IIILFTDVFVGFHSPHGWEVI), and 442-462 (FINMFIATFPVMLDTVFKYWI).

The protein belongs to the CemA family.

It is found in the cell inner membrane. Its function is as follows. Required for H(+) efflux immediately after light irradiation to form a rapid H(+) concentration gradient across the thylakoid membranes. Together with PxcL, contributes to transient H(+) uptake following dark to light transition. The chain is Proton extrusion protein PxcA from Acaryochloris marina (strain MBIC 11017).